The chain runs to 278 residues: Sulfur carrier protein FdhD (278 aa).

The active-site Cysteine persulfide intermediate is the C121. 260 to 265 (FCKPGR) lines the Mo-bis(molybdopterin guanine dinucleotide) pocket.

This sequence belongs to the FdhD family.

Its subcellular location is the cytoplasm. Required for formate dehydrogenase (FDH) activity. Acts as a sulfur carrier protein that transfers sulfur from IscS to the molybdenum cofactor prior to its insertion into FDH. The polypeptide is Sulfur carrier protein FdhD (Salmonella paratyphi A (strain ATCC 9150 / SARB42)).